The primary structure comprises 317 residues: E3 ubiquitin-protein ligase NRDP1 (317 aa).

Residues 18–57 form an RING-type; degenerate zinc finger; the sequence is CPICSGVLEEPVQAPHCEHAFCNACITQWFSQQQTCPVDR. The stretch at 135 to 175 forms a coiled coil; it reads IKHLRSVVQQQQIRIGELEKTAAESKHQLSEQKRDIQLLKA.

The enzyme catalyses S-ubiquitinyl-[E2 ubiquitin-conjugating enzyme]-L-cysteine + [acceptor protein]-L-lysine = [E2 ubiquitin-conjugating enzyme]-L-cysteine + N(6)-ubiquitinyl-[acceptor protein]-L-lysine.. It participates in protein modification; protein ubiquitination. In terms of biological role, acts as E3 ubiquitin-protein ligase and regulates the degradation of target proteins. This Xenopus laevis (African clawed frog) protein is E3 ubiquitin-protein ligase NRDP1 (rnf41).